We begin with the raw amino-acid sequence, 396 residues long: Aspartate aminotransferase (396 aa).

L-aspartate is bound by residues Gly34, Trp130, and Asn183. Position 246 is an N6-(pyridoxal phosphate)lysine (Lys246). Arg374 contributes to the L-aspartate binding site.

The protein belongs to the class-I pyridoxal-phosphate-dependent aminotransferase family. As to quaternary structure, homodimer. Pyridoxal 5'-phosphate serves as cofactor.

Its subcellular location is the cytoplasm. The enzyme catalyses L-aspartate + 2-oxoglutarate = oxaloacetate + L-glutamate. This chain is Aspartate aminotransferase (aspC), found in Escherichia coli (strain K12).